The sequence spans 94 residues: Large ribosomal subunit protein bL28 (94 aa).

It belongs to the bacterial ribosomal protein bL28 family.

The protein is Large ribosomal subunit protein bL28 of Maricaulis maris (strain MCS10) (Caulobacter maris).